A 215-amino-acid polypeptide reads, in one-letter code: MELFLDTANVDEIREAAALGVISGVTTNPSLIAREGRDFTQVVREITGLVDGPVSAEVISTEAEAMVAEAEELSQIHPNVVIKIPMILEGLKAVSMLEPRGIRTNVTLVFSANQALLAALAGASFVSPFVGRLDDAGHDGMEVVRDTVDIFDLYELPTRVIAASIRHPLHVLAAAKAGAHIATVPYQVLMQMAGHPLTDVGLRKFLDDWARLKKR.

Lysine 83 acts as the Schiff-base intermediate with substrate in catalysis.

Belongs to the transaldolase family. Type 3B subfamily.

The protein localises to the cytoplasm. It carries out the reaction D-sedoheptulose 7-phosphate + D-glyceraldehyde 3-phosphate = D-erythrose 4-phosphate + beta-D-fructose 6-phosphate. Its pathway is carbohydrate degradation; pentose phosphate pathway; D-glyceraldehyde 3-phosphate and beta-D-fructose 6-phosphate from D-ribose 5-phosphate and D-xylulose 5-phosphate (non-oxidative stage): step 2/3. Functionally, transaldolase is important for the balance of metabolites in the pentose-phosphate pathway. The chain is Probable transaldolase from Desulforudis audaxviator (strain MP104C).